The chain runs to 126 residues: Large ribosomal subunit protein bL17 (126 aa).

It belongs to the bacterial ribosomal protein bL17 family. Part of the 50S ribosomal subunit. Contacts protein L32.

The polypeptide is Large ribosomal subunit protein bL17 (Xylella fastidiosa (strain Temecula1 / ATCC 700964)).